The chain runs to 380 residues: MTLDAARLTADLIRCASVTPADDGALDVLERVLSQAGFSCTRVDRGGICNLFARWGDKGHARSFGFNGHTDVVPVGDAAAWTVAPFGAEEKDGFLYGRGATDMKSGVAAFVAAAVDLVTTTPPEGAVIVTITGDEEGDALDGTKALLDYMAASGERMSVCLVGEPTCPDRMGEMIKIGRRGSMTAWFTVTGVQGHSAYPHRAKNPLPAMARLMDRLASHGLDQGTDHFDPSTLAVVTIDTGNTATNVIPAQCRGAVNIRFNDLHSGASLTGWMQGEADRVAEEFGVAVEMKVKISGESFLTPPGELSDLVAAAVEAETGVTPVLSTSGGTSDARFVKDHCPVVEFGLVGRTMHQVDERVEIAQIHQLKAIYGRILRDFFA.

His-69 contributes to the Zn(2+) binding site. The active site involves Asp-71. Residue Asp-102 coordinates Zn(2+). The Proton acceptor role is filled by Glu-135. Zn(2+) contacts are provided by Glu-136, Glu-164, and His-353.

It belongs to the peptidase M20A family. DapE subfamily. In terms of assembly, homodimer. Zn(2+) is required as a cofactor. It depends on Co(2+) as a cofactor.

It carries out the reaction N-succinyl-(2S,6S)-2,6-diaminopimelate + H2O = (2S,6S)-2,6-diaminopimelate + succinate. It functions in the pathway amino-acid biosynthesis; L-lysine biosynthesis via DAP pathway; LL-2,6-diaminopimelate from (S)-tetrahydrodipicolinate (succinylase route): step 3/3. Functionally, catalyzes the hydrolysis of N-succinyl-L,L-diaminopimelic acid (SDAP), forming succinate and LL-2,6-diaminopimelate (DAP), an intermediate involved in the bacterial biosynthesis of lysine and meso-diaminopimelic acid, an essential component of bacterial cell walls. This chain is Succinyl-diaminopimelate desuccinylase, found in Ruegeria pomeroyi (strain ATCC 700808 / DSM 15171 / DSS-3) (Silicibacter pomeroyi).